Consider the following 540-residue polypeptide: Ecdysone 20-monooxygenase (540 aa).

Heme is bound at residue C488.

Belongs to the cytochrome P450 family. Heme is required as a cofactor. As to expression, strong expression by embryonic stage 10 in epidermis, decreases significantly in older embryos. Third instar larvae show expression in the midgut copper cells, Malpighian tubules and fat body. In the adult ovaries, expression is seen in both nurse cells and centripetally migrating follicle cells.

It localises to the mitochondrion membrane. It catalyses the reaction ecdysone + AH2 + O2 = 20-hydroxyecdysone + A + H2O. It functions in the pathway steroid biosynthesis; ecdysteroid biosynthesis. Its function is as follows. Required for CNS development; midline glial cells. Involved in the metabolism of insect hormones; responsible for all ecdysone 20-monooxygenase activity during embryonic, larval and adult stages. May be involved in the breakdown of synthetic insecticides. This Drosophila melanogaster (Fruit fly) protein is Ecdysone 20-monooxygenase (shd).